The following is a 158-amino-acid chain: Large ribosomal subunit protein uL16 (158 aa).

The protein belongs to the universal ribosomal protein uL16 family. Part of the 50S ribosomal subunit.

Its function is as follows. Binds 23S rRNA and is also seen to make contacts with the A and possibly P site tRNAs. The protein is Large ribosomal subunit protein uL16 of Synechococcus sp. (strain CC9902).